The chain runs to 657 residues: Acetyl-coenzyme A synthetase (657 aa).

CoA contacts are provided by residues 192–195 (RRGK) and Thr-311. ATP contacts are provided by residues 387–389 (GEP), 411–416 (DTWWQT), Asp-504, Arg-519, and Arg-530. The Mg(2+) site is built by His-543 and Val-546. CoA is bound at residue Arg-592. Position 617 is an N6-acetyllysine (Lys-617).

It belongs to the ATP-dependent AMP-binding enzyme family. Mg(2+) serves as cofactor. In terms of processing, acetylated. Deacetylation by the SIR2-homolog deacetylase activates the enzyme.

It catalyses the reaction acetate + ATP + CoA = acetyl-CoA + AMP + diphosphate. Functionally, catalyzes the conversion of acetate into acetyl-CoA (AcCoA), an essential intermediate at the junction of anabolic and catabolic pathways. AcsA undergoes a two-step reaction. In the first half reaction, AcsA combines acetate with ATP to form acetyl-adenylate (AcAMP) intermediate. In the second half reaction, it can then transfer the acetyl group from AcAMP to the sulfhydryl group of CoA, forming the product AcCoA. This is Acetyl-coenzyme A synthetase from Campylobacter jejuni subsp. jejuni serotype O:2 (strain ATCC 700819 / NCTC 11168).